Here is a 441-residue protein sequence, read N- to C-terminus: GTPase Der (441 aa).

EngA-type G domains lie at 4–168 (PVVA…PEDI) and 177–352 (IRIA…EQNS). Residues 10-17 (GRPNVGKS), 57-61 (DTGGI), 121-124 (NKVE), 183-190 (GRPNVGKS), 230-234 (DTAGM), and 295-298 (NKWD) contribute to the GTP site. The 85-residue stretch at 353 to 437 (TRVATATLNT…PIRMIVRQKD (85 aa)) folds into the KH-like domain.

Belongs to the TRAFAC class TrmE-Era-EngA-EngB-Septin-like GTPase superfamily. EngA (Der) GTPase family. In terms of assembly, associates with the 50S ribosomal subunit.

GTPase that plays an essential role in the late steps of ribosome biogenesis. The chain is GTPase Der from Desulfitobacterium hafniense (strain DSM 10664 / DCB-2).